The chain runs to 963 residues: Probable sucrose-phosphate synthase 2 (963 aa).

The tract at residues 111 to 150 (KLRTDTNADMSEDLFEGEKGEDAGDPSVAYGDSTTGSSPK) is disordered.

Belongs to the glycosyltransferase 1 family. As to quaternary structure, homodimer or homotetramer. As to expression, expressed in germinating seeds.

The catalysed reaction is beta-D-fructose 6-phosphate + UDP-alpha-D-glucose = sucrose 6(F)-phosphate + UDP + H(+). The protein operates within glycan biosynthesis; sucrose biosynthesis; sucrose from D-fructose 6-phosphate and UDP-alpha-D-glucose: step 1/2. With respect to regulation, activity is regulated by phosphorylation and moderated by concentration of metabolites and light. Plays a role in photosynthetic sucrose synthesis by catalyzing the rate-limiting step of sucrose biosynthesis from UDP-glucose and fructose- 6-phosphate. Involved in the regulation of carbon partitioning in the leaves of plants. May regulate the synthesis of sucrose and therefore play a major role as a limiting factor in the export of photoassimilates out of the leaf. Plays a role for sucrose availability that is essential for plant growth and fiber elongation. In Oryza sativa subsp. japonica (Rice), this protein is Probable sucrose-phosphate synthase 2 (SPS2).